We begin with the raw amino-acid sequence, 149 residues long: Large ribosomal subunit protein uL16c (149 aa).

The protein belongs to the universal ribosomal protein uL16 family. In terms of assembly, part of the 50S ribosomal subunit.

It localises to the plastid. It is found in the organellar chromatophore. The sequence is that of Large ribosomal subunit protein uL16c (rpl16) from Paulinella chromatophora.